The following is a 115-amino-acid chain: MGGCPVRKRRRNGSKEGNHHSTQPKRNKRNPIFQDSQDTEFSWSDNERSSSRINIPERASGPEGNLNQIVTEPDANFPQFLHEGLSKPVYVINWFMSFGPEIKLNTSQQGRNQAV.

Basic residues predominate over residues 1–12; it reads MGGCPVRKRRRN. The tract at residues 1–70 is disordered; it reads MGGCPVRKRR…GPEGNLNQIV (70 aa). The span at 33–44 shows a compositional bias: polar residues; that stretch reads FQDSQDTEFSWS.

This sequence belongs to the VCF family.

In Homo sapiens (Human), this protein is Protein VCF2.